The sequence spans 368 residues: H-2 class I histocompatibility antigen, K-W28 alpha chain (368 aa).

The N-terminal stretch at methionine 1 to alanine 21 is a signal peptide. Residues glycine 22–glycine 111 are alpha-1. Topologically, residues glycine 22–threonine 305 are extracellular. Asparagine 107 carries an N-linked (GlcNAc...) asparagine glycan. Residues glycine 112 to threonine 203 form an alpha-2 region. A disulfide bridge connects residues cysteine 122 and cysteine 185. The N-linked (GlcNAc...) asparagine glycan is linked to asparagine 197. Positions aspartate 204 to tryptophan 295 are alpha-3. Positions proline 206–threonine 292 constitute an Ig-like C1-type domain. A disulfide bond links cysteine 224 and cysteine 280. Positions glutamate 296–threonine 305 are connecting peptide. A helical membrane pass occupies residues valine 306–methionine 329. Residues arginine 330–alanine 368 are Cytoplasmic-facing. A phosphoserine mark is found at serine 350 and serine 353.

It belongs to the MHC class I family. In terms of assembly, heterodimer of an alpha chain and a beta chain (beta-2-microglobulin).

The protein resides in the membrane. Functionally, involved in the presentation of foreign antigens to the immune system. This is H-2 class I histocompatibility antigen, K-W28 alpha chain (H2-K1) from Mus musculus (Mouse).